The chain runs to 476 residues: Sulfate adenylyltransferase subunit 1 (476 aa).

Positions 24 to 239 (KSLLRFLTCG…LLETVDVDYE (216 aa)) constitute a tr-type G domain. The G1 stretch occupies residues 33 to 40 (GSVDDGKS). 33 to 40 (GSVDDGKS) contacts GTP. A G2 region spans residues 91–95 (GITID). The interval 112–115 (DTPG) is G3. Residues 112–116 (DTPGH) and 167–170 (NKMD) contribute to the GTP site. A G4 region spans residues 167 to 170 (NKMD). The interval 205–207 (SAL) is G5.

It belongs to the TRAFAC class translation factor GTPase superfamily. Classic translation factor GTPase family. CysN/NodQ subfamily. Heterodimer composed of CysD, the smaller subunit, and CysN.

The catalysed reaction is sulfate + ATP + H(+) = adenosine 5'-phosphosulfate + diphosphate. It functions in the pathway sulfur metabolism; hydrogen sulfide biosynthesis; sulfite from sulfate: step 1/3. In terms of biological role, with CysD forms the ATP sulfurylase (ATPS) that catalyzes the adenylation of sulfate producing adenosine 5'-phosphosulfate (APS) and diphosphate, the first enzymatic step in sulfur assimilation pathway. APS synthesis involves the formation of a high-energy phosphoric-sulfuric acid anhydride bond driven by GTP hydrolysis by CysN coupled to ATP hydrolysis by CysD. The chain is Sulfate adenylyltransferase subunit 1 from Vibrio parahaemolyticus serotype O3:K6 (strain RIMD 2210633).